A 275-amino-acid chain; its full sequence is Large ribosomal subunit protein uL2 (275 aa).

2 disordered regions span residues 36 to 55 (KQSK…RHQG) and 223 to 275 (VAMN…RHKR). Residues 39 to 48 (KNAGRNNSGR) are compositionally biased toward polar residues. Over residues 229–239 (DHPHGGGEGRT) the composition is skewed to basic and acidic residues.

The protein belongs to the universal ribosomal protein uL2 family. Part of the 50S ribosomal subunit. Forms a bridge to the 30S subunit in the 70S ribosome.

Its function is as follows. One of the primary rRNA binding proteins. Required for association of the 30S and 50S subunits to form the 70S ribosome, for tRNA binding and peptide bond formation. It has been suggested to have peptidyltransferase activity; this is somewhat controversial. Makes several contacts with the 16S rRNA in the 70S ribosome. The protein is Large ribosomal subunit protein uL2 of Aromatoleum aromaticum (strain DSM 19018 / LMG 30748 / EbN1) (Azoarcus sp. (strain EbN1)).